Here is a 401-residue protein sequence, read N- to C-terminus: Argininosuccinate synthase (401 aa).

ATP-binding positions include 7–15 (AYSGGLDTS) and Ala34. L-citrulline is bound by residues Tyr85 and Ser90. Position 115 (Gly115) interacts with ATP. L-aspartate is bound by residues Thr117, Asn121, and Asp122. Asn121 provides a ligand contact to L-citrulline. 5 residues coordinate L-citrulline: Arg125, Ser174, Ser183, Glu259, and Tyr271.

The protein belongs to the argininosuccinate synthase family. Type 1 subfamily. In terms of assembly, homotetramer.

It localises to the cytoplasm. It catalyses the reaction L-citrulline + L-aspartate + ATP = 2-(N(omega)-L-arginino)succinate + AMP + diphosphate + H(+). It functions in the pathway amino-acid biosynthesis; L-arginine biosynthesis; L-arginine from L-ornithine and carbamoyl phosphate: step 2/3. The polypeptide is Argininosuccinate synthase (Desulfitobacterium hafniense (strain DSM 10664 / DCB-2)).